A 542-amino-acid polypeptide reads, in one-letter code: Chaperonin GroEL 2 (542 aa).

ATP-binding positions include 30–33 (TLGP), Lys-51, 87–91 (DGTTT), Gly-415, and Asp-496.

This sequence belongs to the chaperonin (HSP60) family. Forms a cylinder of 14 subunits composed of two heptameric rings stacked back-to-back. Interacts with the co-chaperonin GroES.

Its subcellular location is the cytoplasm. The enzyme catalyses ATP + H2O + a folded polypeptide = ADP + phosphate + an unfolded polypeptide.. Functionally, together with its co-chaperonin GroES, plays an essential role in assisting protein folding. The GroEL-GroES system forms a nano-cage that allows encapsulation of the non-native substrate proteins and provides a physical environment optimized to promote and accelerate protein folding. This is Chaperonin GroEL 2 from Azorhizobium caulinodans (strain ATCC 43989 / DSM 5975 / JCM 20966 / LMG 6465 / NBRC 14845 / NCIMB 13405 / ORS 571).